Reading from the N-terminus, the 448-residue chain is Ribosome biogenesis protein YTM1 (448 aa).

The segment at 5–86 is ubiquitin-like (UBL) domain; sequence TSNQAVVFST…EETLEIEYIE (82 aa). WD repeat units lie at residues 98 to 136, 191 to 230, 271 to 309, 312 to 351, 357 to 397, and 403 to 439; these read PHES…TLDA, LHTA…KHEV, SHIG…CTRT, ASEK…ALSA, LHPA…AAIS, and DGTK…ETQG. Residues 225–261 form a disordered region; sequence PPKHEVPEPTITAADQRTKKRRKVDPSSGDSSSPTAI.

The protein belongs to the WD repeat WDR12/YTM1 family. Component of the NOP7 complex, composed of ERB1, NOP7 and YTM1. The complex is held together by ERB1, which interacts with NOP7 via its N-terminal domain and with YTM1 via a high-affinity interaction between the seven-bladed beta-propeller domains of the 2 proteins. The NOP7 complex associates with the 66S pre-ribosome. Interacts (via UBL domain) with MDN1 (via VWFA/MIDAS domain).

The protein resides in the nucleus. The protein localises to the nucleolus. Its subcellular location is the nucleoplasm. Component of the NOP7 complex, which is required for maturation of the 25S and 5.8S ribosomal RNAs and formation of the 60S ribosome. This chain is Ribosome biogenesis protein YTM1, found in Coprinopsis cinerea (strain Okayama-7 / 130 / ATCC MYA-4618 / FGSC 9003) (Inky cap fungus).